Here is a 257-residue protein sequence, read N- to C-terminus: ADP-dependent (S)-NAD(P)H-hydrate dehydratase (257 aa).

Residues methionine 1–arginine 257 form the YjeF C-terminal domain. Glycine 200 is a binding site for AMP. Aspartate 201 contributes to the (6S)-NADPHX binding site.

It belongs to the NnrD/CARKD family. Homotetramer. The cofactor is Mg(2+).

The enzyme catalyses (6S)-NADHX + ADP = AMP + phosphate + NADH + H(+). The catalysed reaction is (6S)-NADPHX + ADP = AMP + phosphate + NADPH + H(+). Its function is as follows. Catalyzes the dehydration of the S-form of NAD(P)HX at the expense of ADP, which is converted to AMP. Together with NAD(P)HX epimerase, which catalyzes the epimerization of the S- and R-forms, the enzyme allows the repair of both epimers of NAD(P)HX, a damaged form of NAD(P)H that is a result of enzymatic or heat-dependent hydration. This is ADP-dependent (S)-NAD(P)H-hydrate dehydratase from Haloterrigena turkmenica (strain ATCC 51198 / DSM 5511 / JCM 9101 / NCIMB 13204 / VKM B-1734 / 4k) (Halococcus turkmenicus).